Consider the following 431-residue polypeptide: Peptidase B (431 aa).

Mn(2+) is bound by residues K196 and D201. K208 is a catalytic residue. Mn(2+) contacts are provided by D219, D278, and E280. R282 is a catalytic residue.

Belongs to the peptidase M17 family. In terms of assembly, homohexamer. Mn(2+) serves as cofactor.

The protein localises to the cytoplasm. The enzyme catalyses Release of an N-terminal amino acid, Xaa, from a peptide or arylamide. Xaa is preferably Glu or Asp but may be other amino acids, including Leu, Met, His, Cys and Gln.. Probably plays an important role in intracellular peptide degradation. This is Peptidase B from Vibrio atlanticus (strain LGP32) (Vibrio splendidus (strain Mel32)).